Consider the following 555-residue polypeptide: F-box only protein 33 (555 aa).

Residues 65–111 (AAGAASLPSELIVHIFSFLPAPDRLRASASCSHWRECLFYPALWPQL) enclose the F-box domain.

As to quaternary structure, part of the SCF (SKP1-CUL1-F-box) E3 ubiquitin-protein ligase complex SCF(FBXO33) formed of CUL1, SKP1, RBX1 and FBXO33. Interacts via its N-terminus with YBX1 CSD domain. Directly interacts with SKP1 and CUL1.

The protein operates within protein modification; protein ubiquitination. Functionally, substrate recognition component of a SCF (SKP1-CUL1-F-box protein) E3 ubiquitin-protein ligase complex which mediates the ubiquitination and subsequent proteasomal degradation of target proteins. Probably recognizes and binds to phosphorylated target proteins. Recognizes YBX1. This chain is F-box only protein 33 (FBXO33), found in Homo sapiens (Human).